The following is a 346-amino-acid chain: Enkurin domain-containing protein 1 (346 aa).

Residues 1 to 35 (MCEGPSRISGPIPPDPTLCPDNYRRPTSAQGRLEG) are disordered. Serine 91 is subject to Phosphoserine. A required for binding to microtubules region spans residues 91–171 (SLKRKDPKDH…AHFLRAHSRC (81 aa)). Positions 114-125 (RFREQERSREQG) are enriched in basic and acidic residues. Disordered regions lie at residues 114-137 (RFRE…WRSP), 167-197 (AHSR…EPGL), and 260-280 (AEAR…TRMP). Serine 136 is subject to Phosphoserine. Residues 174–190 (GLPPPHVSSPQPTPPGP) show a composition bias toward pro residues. The Enkurin domain maps to 251 to 343 (ERRDLWRREA…IFSRPKVFVK (93 aa)).

Interacts with alpha-tubulin. Interacts (via central region) with CCP110 (via N-terminal region); competes with CEP97 for binding to CCP110.

It is found in the cytoplasm. Its subcellular location is the cytoskeleton. It localises to the microtubule organizing center. The protein resides in the centrosome. The protein localises to the centriole. It is found in the cilium basal body. Its subcellular location is the cell projection. It localises to the cilium. The protein resides in the spindle. The protein localises to the spindle pole. It is found in the cilium axoneme. Microtubule-binding protein which regulates microtubule organization and stability. Promotes the stability of astral microtubules and facilitates the proper orientation of the mitotic spindle. This allows the oriented division of basal keratinocytes and contributes to epidermal stratification. Required for the assembly of both primary and motile cilia. Destabilizes the interaction between CCP110 and CEP97 by competing with CEP97 for binding to CCP110 which promotes the removal of CCP110 and CEP97 from the mother centriole and allows the initiation of ciliogenesis. This chain is Enkurin domain-containing protein 1 (ENKD1), found in Homo sapiens (Human).